The primary structure comprises 423 residues: Structure-specific endonuclease subunit SLX1 (423 aa).

The region spanning 23–105 (AFYCCYLLRS…QNTKVSRHAD (83 aa)) is the GIY-YIG domain. Disordered stretches follow at residues 300–334 (RRRR…DALQ) and 365–406 (AHRP…LGLQ).

It belongs to the SLX1 family. In terms of assembly, forms a heterodimer with SLX4. The cofactor is a divalent metal cation.

It is found in the nucleus. Functionally, catalytic subunit of the SLX1-SLX4 structure-specific endonuclease that resolves DNA secondary structures generated during DNA repair and recombination. Has endonuclease activity towards branched DNA substrates, introducing single-strand cuts in duplex DNA close to junctions with ss-DNA. The polypeptide is Structure-specific endonuclease subunit SLX1 (Paracoccidioides brasiliensis (strain Pb03)).